Reading from the N-terminus, the 563-residue chain is Pyruvate decarboxylase isozyme 1 (563 aa).

S2 is subject to N-acetylserine. Residues D28, H115, and Y157 each coordinate pyruvate. Position 161 is an omega-N-methylarginine (R161). A Glycyl lysine isopeptide (Lys-Gly) (interchain with G-Cter in ubiquitin) cross-link involves residue K212. At S223 the chain carries Phosphoserine. Position 224 (R224) interacts with pyruvate. A Glycyl lysine isopeptide (Lys-Gly) (interchain with G-Cter in ubiquitin) cross-link involves residue K233. T266 carries the phosphothreonine modification. Residues K269 and K332 each participate in a glycyl lysine isopeptide (Lys-Gly) (interchain with G-Cter in ubiquitin) cross-link. Phosphothreonine occurs at positions 336 and 353. Thiamine diphosphate contacts are provided by residues T390 and 413–415 (GSI). D444 is a binding site for Mg(2+). Thiamine diphosphate contacts are provided by residues 445 to 446 (GS) and 471 to 476 (NDGYTI). Positions 471 and 473 each coordinate Mg(2+). Pyruvate is bound at residue E477. Residues K484, K505, and K520 each participate in a glycyl lysine isopeptide (Lys-Gly) (interchain with G-Cter in ubiquitin) cross-link. Residue T522 is modified to Phosphothreonine. S526 is modified (phosphoserine).

The protein belongs to the TPP enzyme family. Homotetramer. Mg(2+) serves as cofactor. The cofactor is thiamine diphosphate. Cleavage of N-terminal methionine and N-terminal acetylation by NAT1/ARD1.

The protein localises to the cytoplasm. The protein resides in the nucleus. It catalyses the reaction pyruvate + H(+) = acetaldehyde + CO2. The enzyme catalyses 3-methyl-2-oxobutanoate + H(+) = 2-methylpropanal + CO2. The catalysed reaction is (S)-3-methyl-2-oxopentanoate + H(+) = 2-methylbutanal + CO2. It carries out the reaction indole-3-pyruvate + H(+) = indole-3-acetaldehyde + CO2. It catalyses the reaction 3-phenylpyruvate + H(+) = 2-phenylacetaldehyde + CO2. The enzyme catalyses 2-oxobutanoate + H(+) = propanal + CO2. The catalysed reaction is 2-oxopentanoate + H(+) = butanal + CO2. It carries out the reaction 2 acetaldehyde = acetoin. It catalyses the reaction acetaldehyde + pyruvate + H(+) = acetoin + CO2. It functions in the pathway fermentation; ethanol fermentation. The protein operates within amino-acid degradation; Ehrlich pathway. Allosterically activated by its substrate, pyruvate. Functionally, major of three pyruvate decarboxylases (PDC1, PDC5, PDC6) implicated in the nonoxidative conversion of pyruvate to acetaldehyde and carbon dioxide during alcoholic fermentation. Most of the produced acetaldehyde is subsequently reduced to ethanol, but some is required for cytosolic acetyl-CoA production for biosynthetic pathways. The enzyme is also one of five 2-oxo acid decarboxylases (PDC1, PDC5, PDC6, ARO10, and THI3) able to decarboxylate more complex 2-oxo acids (alpha-ketoacids) than pyruvate, which seem mainly involved in amino acid catabolism. Here the enzyme catalyzes the decarboxylation of amino acids, which, in a first step, have been transaminated to the corresponding 2-oxo acids. In a third step, the resulting aldehydes are reduced to alcohols, collectively referred to as fusel oils or alcohols. Its preferred substrates are the transaminated amino acids derived from threonine (2-oxobutanoate), norvaline (2-oxopentanoate), valine (3-methyl-2-oxobutanoate, also alpha-keto-isovalerate), isoleucine ((3S)-3-methyl-2-oxopentanoate, also alpha-keto-beta-methylvalerate), phenylalanine (phenylpyruvate), and tryptophan (3-(indol-3-yl)pyruvate), whereas transaminated leucine is no substrate. In a side-reaction the carbanionic intermediate (or active aldehyde) generated by decarboxylation or by activation of an aldehyde can react with an aldehyde via condensation (or carboligation) yielding a 2-hydroxy ketone, collectively called acyloins. The sequence is that of Pyruvate decarboxylase isozyme 1 from Saccharomyces cerevisiae (strain ATCC 204508 / S288c) (Baker's yeast).